The sequence spans 353 residues: tRNA N6-adenosine threonylcarbamoyltransferase (353 aa).

Fe cation is bound by residues histidine 111 and histidine 115. Substrate contacts are provided by residues 134–138 (LVSGG), aspartate 167, glycine 180, aspartate 184, and asparagine 279. Position 307 (aspartate 307) interacts with Fe cation.

Belongs to the KAE1 / TsaD family. Fe(2+) is required as a cofactor.

The protein localises to the cytoplasm. The enzyme catalyses L-threonylcarbamoyladenylate + adenosine(37) in tRNA = N(6)-L-threonylcarbamoyladenosine(37) in tRNA + AMP + H(+). Required for the formation of a threonylcarbamoyl group on adenosine at position 37 (t(6)A37) in tRNAs that read codons beginning with adenine. Is involved in the transfer of the threonylcarbamoyl moiety of threonylcarbamoyl-AMP (TC-AMP) to the N6 group of A37, together with TsaE and TsaB. TsaD likely plays a direct catalytic role in this reaction. In Thermosynechococcus vestitus (strain NIES-2133 / IAM M-273 / BP-1), this protein is tRNA N6-adenosine threonylcarbamoyltransferase.